Consider the following 212-residue polypeptide: NADH dehydrogenase [ubiquinone] iron-sulfur protein 8, mitochondrial (212 aa).

Residues 1-34 constitute a mitochondrion transit peptide; it reads MYRLSSSMLPRALAQAMRTGHLNGQSLHSSAVAA. 4Fe-4S ferredoxin-type domains lie at 104–133 and 143–172; these read RRYP…IEAE and TRYD…EGPN. Residues Cys-113, Cys-116, Cys-119, Cys-123, Cys-152, Cys-155, Cys-158, and Cys-162 each coordinate [4Fe-4S] cluster.

The protein belongs to the complex I 23 kDa subunit family. As to quaternary structure, complex I is composed of 45 different subunits. This is a component of the iron-sulfur (IP) fragment of the enzyme. Interacts with RAB5IF. The cofactor is [4Fe-4S] cluster.

It localises to the mitochondrion inner membrane. It catalyses the reaction a ubiquinone + NADH + 5 H(+)(in) = a ubiquinol + NAD(+) + 4 H(+)(out). In terms of biological role, core subunit of the mitochondrial membrane respiratory chain NADH dehydrogenase (Complex I) which catalyzes electron transfer from NADH through the respiratory chain, using ubiquinone as an electron acceptor. Essential for the catalytic activity and assembly of complex I. The polypeptide is NADH dehydrogenase [ubiquinone] iron-sulfur protein 8, mitochondrial (Ndufs8) (Mus musculus (Mouse)).